The chain runs to 104 residues: Complex III assembly factor LYRM7 (104 aa).

Ser60 carries the post-translational modification Phosphoserine.

Belongs to the complex I LYR family. Interacts with UQCRFS1.

It is found in the mitochondrion matrix. In terms of biological role, assembly factor required for Rieske Fe-S protein UQCRFS1 incorporation into the cytochrome b-c1 (CIII) complex. Functions as a chaperone, binding to this subunit within the mitochondrial matrix and stabilizing it prior to its translocation and insertion into the late CIII dimeric intermediate within the mitochondrial inner membrane. The polypeptide is Complex III assembly factor LYRM7 (LYRM7) (Bos taurus (Bovine)).